An 841-amino-acid chain; its full sequence is DNA mismatch repair protein MutS (841 aa).

G596–S603 contributes to the ATP binding site.

Belongs to the DNA mismatch repair MutS family.

Its function is as follows. This protein is involved in the repair of mismatches in DNA. It is possible that it carries out the mismatch recognition step. This protein has a weak ATPase activity. The polypeptide is DNA mismatch repair protein MutS (Acholeplasma laidlawii (strain PG-8A)).